A 469-amino-acid polypeptide reads, in one-letter code: Dihydrolipoyl dehydrogenase (469 aa).

FAD-binding positions include 34–42 (EKQYWGGVC), Lys51, and Gly114. A disulfide bridge connects residues Cys42 and Cys47. Residues 179 to 183 (GAGAI), Glu202, and 269 to 272 (SVGF) contribute to the NAD(+) site. Positions 312 and 320 each coordinate FAD. The active-site Proton acceptor is the His448.

Belongs to the class-I pyridine nucleotide-disulfide oxidoreductase family. Homodimer. Part of an unusual ODH/PDH supercomplex, consisting of AceE (E1), AceF (E2), and Lpd (E3) together with OdhA (E1+E2). The cofactor is FAD.

It localises to the cytoplasm. The enzyme catalyses N(6)-[(R)-dihydrolipoyl]-L-lysyl-[protein] + NAD(+) = N(6)-[(R)-lipoyl]-L-lysyl-[protein] + NADH + H(+). Its pathway is carbohydrate metabolism; tricarboxylic acid cycle; succinyl-CoA from 2-oxoglutarate (dehydrogenase route): step 1/1. Its function is as follows. Lipoamide dehydrogenase is an essential component of the pyruvate dehydrogenase (PDH) and 2-oxoglutarate dehydrogenase (ODH) complexes. Catalyzes the reoxidation of dihydrolipoyl groups which are covalently attached to the lipoate acyltransferase components (E2) of the complexes. Also catalyzes a reversible NADH:NAD(+) transhydrogenation, and is able to transfer electrons from NADH to various redox-active compounds and quinones. May be involved in quinone redox cycling in C.glutamicum. The chain is Dihydrolipoyl dehydrogenase (lpd) from Corynebacterium glutamicum (strain ATCC 13032 / DSM 20300 / JCM 1318 / BCRC 11384 / CCUG 27702 / LMG 3730 / NBRC 12168 / NCIMB 10025 / NRRL B-2784 / 534).